A 141-amino-acid polypeptide reads, in one-letter code: MAVNYETKATNTGGRNGHVQTDDKAIDVAIVPPAQADAEKGTNPEQLFAAGYASCFNGAFDLILKQNKVRGAEPEVTLTVRLEDDPEAESPKLSVSIDAKVKNVLSQEEAEKYLQDAHEFCPYSKATRGNIEVDLNVAVVD.

The disordered stretch occupies residues 1 to 20 (MAVNYETKATNTGGRNGHVQ).

Belongs to the OsmC/Ohr family.

The protein is Organic hydroperoxide resistance protein-like 1 of Staphylococcus saprophyticus subsp. saprophyticus (strain ATCC 15305 / DSM 20229 / NCIMB 8711 / NCTC 7292 / S-41).